The primary structure comprises 322 residues: Protease HtpX homolog (322 aa).

A run of 2 helical transmembrane segments spans residues 19–39 (ILLI…CYLL) and 61–81 (FINL…IAYF). His165 serves as a coordination point for Zn(2+). Residue Glu166 is part of the active site. Position 169 (His169) interacts with Zn(2+). 2 helical membrane passes run 175 to 195 (VRLL…AQIA) and 216 to 236 (ILIL…ATLM). Glu245 is a binding site for Zn(2+).

It belongs to the peptidase M48B family. Zn(2+) is required as a cofactor.

It is found in the cell inner membrane. The protein is Protease HtpX homolog of Bacteroides fragilis (strain ATCC 25285 / DSM 2151 / CCUG 4856 / JCM 11019 / LMG 10263 / NCTC 9343 / Onslow / VPI 2553 / EN-2).